The chain runs to 368 residues: MSESPKKVIVGMSGGVDSSVSAWLLQQQGYQVEGLFMKNWEEDDGEEYCTAAADLADAQAVCDKLGIELHTVNFAAEYWDNVFELFLEEYKAGRTPNPDILCNKEIKFKAFLEFAAEDLGADYIATGHYVRRADVNGKSRLLRGLDGNKDQSYFLYTLGHEQIAQSLFPVGELEKPQVRKIAEDLGLVTAKKKDSTGICFIGERKFRDFLGRYLPAQPGKIITVDGDEIGEHQGLMYHTLGQRKGLGIGGTKDGSEDPWYVVDKDVENNVLIVAQGHEHPRLMSVGLIAQQLHWVDREPFTGTLRCTVKTRYRQTDIPCTINALDDDRIEVIFDEPVAAVTPGQSAVFYSGEVCLGGGIIEQRLPLTV.

Residues 11 to 18 and Met37 each bind ATP; that span reads GMSGGVDS. Residues 97–99 form an interaction with target base in tRNA region; that stretch reads NPD. The Nucleophile role is filled by Cys102. An intrachain disulfide couples Cys102 to Cys199. Gly127 serves as a coordination point for ATP. The interval 149–151 is interaction with tRNA; the sequence is KDQ. Catalysis depends on Cys199, which acts as the Cysteine persulfide intermediate. The interval 311–312 is interaction with tRNA; the sequence is RY.

It belongs to the MnmA/TRMU family. As to quaternary structure, interacts with TusE.

The protein localises to the cytoplasm. It catalyses the reaction S-sulfanyl-L-cysteinyl-[protein] + uridine(34) in tRNA + AH2 + ATP = 2-thiouridine(34) in tRNA + L-cysteinyl-[protein] + A + AMP + diphosphate + H(+). In terms of biological role, catalyzes the 2-thiolation of uridine at the wobble position (U34) of tRNA(Lys), tRNA(Glu) and tRNA(Gln), leading to the formation of s(2)U34, the first step of tRNA-mnm(5)s(2)U34 synthesis. Sulfur is provided by IscS, via a sulfur-relay system. Binds ATP and its substrate tRNAs. In Salmonella paratyphi B (strain ATCC BAA-1250 / SPB7), this protein is tRNA-specific 2-thiouridylase MnmA.